Here is a 70-residue protein sequence, read N- to C-terminus: Large ribosomal subunit protein eL24 (70 aa).

4 residues coordinate Zn(2+): Cys7, Cys10, Cys33, and Cys37. The C4-type zinc finger occupies 7–37 (CSFCGYEIEPGKGKMVVEKDGTVLYFCSSKC).

This sequence belongs to the eukaryotic ribosomal protein eL24 family. As to quaternary structure, part of the 50S ribosomal subunit. Forms a cluster with proteins L3 and L14. Zn(2+) serves as cofactor.

In terms of biological role, binds to the 23S rRNA. The sequence is that of Large ribosomal subunit protein eL24 from Methanocaldococcus jannaschii (strain ATCC 43067 / DSM 2661 / JAL-1 / JCM 10045 / NBRC 100440) (Methanococcus jannaschii).